Consider the following 439-residue polypeptide: Rho GTPase-activating protein 1 (439 aa).

The residue at position 1 (Met-1) is an N-acetylmethionine. Positions 28 to 48 (IDEKNWPSDEMPDFPKSDDSK) are enriched in basic and acidic residues. The interval 28–52 (IDEKNWPSDEMPDFPKSDDSKSSSP) is disordered. Phosphoserine occurs at positions 44, 47, 50, and 51. The CRAL-TRIO domain maps to 63-218 (PYYDIARHQI…QVLKYDDFLK (156 aa)). Residue Tyr-65 is modified to Phosphotyrosine. An N6-acetyllysine modification is found at Lys-80. The SH3-binding signature appears at 228-238 (PKPMPPRPPLP). A Rho-GAP domain is found at 244 to 431 (VSLQHLQEKN…FLLDHQGELF (188 aa)).

In terms of assembly, found in a complex with XPO7, EIF4A1, ARHGAP1, VPS26A, VPS29, VPS35 and SFN. Interacts with BNIPL. In terms of tissue distribution, ubiquitous.

It is found in the cytoplasm. GTPase activator for the Rho, Rac and Cdc42 proteins, converting them to the putatively inactive GDP-bound state. Cdc42 seems to be the preferred substrate. In Homo sapiens (Human), this protein is Rho GTPase-activating protein 1 (ARHGAP1).